Here is a 64-residue protein sequence, read N- to C-terminus: Large ribosomal subunit protein uL29 (64 aa).

It belongs to the universal ribosomal protein uL29 family.

The polypeptide is Large ribosomal subunit protein uL29 (Synechococcus elongatus (strain ATCC 33912 / PCC 7942 / FACHB-805) (Anacystis nidulans R2)).